Here is a 323-residue protein sequence, read N- to C-terminus: MDWKNTFQPLAHTQNESLPELMMTHVSDWSAITMIGDDKKSYLQGQVTCDVVTLPNDESTLGAHCDAKGKVWSIFRLFHHNGGYALMQPKSAIEVELVEIKKYAVFSKVDIEQTSDVVIGVMGASADQYIDSISESQGKVRVISGGTAVQVSDNRWALLVTQEATEALVSSSTAEKVSEALWQYHEILDAQPNLSKAEQNEHIPQALNLQAIGGISFSKGCYTGQETVARAKYRGMNKREMRIVSGTSSDVLSLENTIELERSVGENWRGAGRLLNVYQFADNQAIGLMVLPNNLDDDVQLRLTAQPEQIWNILPLPYSLDEE.

Residues tryptophan 29 and tryptophan 182 each contribute to the folate site.

It belongs to the tRNA-modifying YgfZ family.

The protein resides in the cytoplasm. Its function is as follows. Folate-binding protein involved in regulating the level of ATP-DnaA and in the modification of some tRNAs. It is probably a key factor in regulatory networks that act via tRNA modification, such as initiation of chromosomal replication. This chain is tRNA-modifying protein YgfZ, found in Vibrio atlanticus (strain LGP32) (Vibrio splendidus (strain Mel32)).